The chain runs to 231 residues: 5'-methylthioadenosine/S-adenosylhomocysteine nucleosidase (231 aa).

Glu12 acts as the Proton acceptor in catalysis. Substrate contacts are provided by residues Gly78, Val153, and 174–175 (ME). Asp198 functions as the Proton donor in the catalytic mechanism.

It belongs to the PNP/UDP phosphorylase family. MtnN subfamily.

The catalysed reaction is S-adenosyl-L-homocysteine + H2O = S-(5-deoxy-D-ribos-5-yl)-L-homocysteine + adenine. The enzyme catalyses S-methyl-5'-thioadenosine + H2O = 5-(methylsulfanyl)-D-ribose + adenine. It carries out the reaction 5'-deoxyadenosine + H2O = 5-deoxy-D-ribose + adenine. It participates in amino-acid biosynthesis; L-methionine biosynthesis via salvage pathway; S-methyl-5-thio-alpha-D-ribose 1-phosphate from S-methyl-5'-thioadenosine (hydrolase route): step 1/2. Catalyzes the irreversible cleavage of the glycosidic bond in both 5'-methylthioadenosine (MTA) and S-adenosylhomocysteine (SAH/AdoHcy) to adenine and the corresponding thioribose, 5'-methylthioribose and S-ribosylhomocysteine, respectively. Also cleaves 5'-deoxyadenosine, a toxic by-product of radical S-adenosylmethionine (SAM) enzymes, into 5-deoxyribose and adenine. This is 5'-methylthioadenosine/S-adenosylhomocysteine nucleosidase from Vibrio campbellii (strain ATCC BAA-1116).